The following is a 150-amino-acid chain: Phosphoribosyl-AMP cyclohydrolase (150 aa).

Residue aspartate 93 coordinates Mg(2+). Cysteine 94 is a binding site for Zn(2+). Mg(2+)-binding residues include aspartate 95 and aspartate 97. Zn(2+) is bound by residues cysteine 112 and cysteine 119.

This sequence belongs to the PRA-CH family. Homodimer. Requires Mg(2+) as cofactor. It depends on Zn(2+) as a cofactor.

Its subcellular location is the cytoplasm. The catalysed reaction is 1-(5-phospho-beta-D-ribosyl)-5'-AMP + H2O = 1-(5-phospho-beta-D-ribosyl)-5-[(5-phospho-beta-D-ribosylamino)methylideneamino]imidazole-4-carboxamide. It participates in amino-acid biosynthesis; L-histidine biosynthesis; L-histidine from 5-phospho-alpha-D-ribose 1-diphosphate: step 3/9. Its function is as follows. Catalyzes the hydrolysis of the adenine ring of phosphoribosyl-AMP. The sequence is that of Phosphoribosyl-AMP cyclohydrolase from Rhizobium etli (strain ATCC 51251 / DSM 11541 / JCM 21823 / NBRC 15573 / CFN 42).